Reading from the N-terminus, the 401-residue chain is Argininosuccinate synthase (401 aa).

ATP contacts are provided by residues 10-18 (AYSGGVDTS) and Ala38. An L-citrulline-binding site is contributed by Tyr89. Gly119 is a binding site for ATP. Positions 121, 125, and 126 each coordinate L-aspartate. Asn125 contacts L-citrulline. Positions 129, 177, 186, 262, and 274 each coordinate L-citrulline.

This sequence belongs to the argininosuccinate synthase family. Type 1 subfamily. Homotetramer.

Its subcellular location is the cytoplasm. The enzyme catalyses L-citrulline + L-aspartate + ATP = 2-(N(omega)-L-arginino)succinate + AMP + diphosphate + H(+). It functions in the pathway amino-acid biosynthesis; L-arginine biosynthesis; L-arginine from L-ornithine and carbamoyl phosphate: step 2/3. In Synechococcus sp. (strain CC9311), this protein is Argininosuccinate synthase.